The primary structure comprises 376 residues: MLNTARLDNPAVIFDNGSGLCKVGISGEIVPRHVINSVVGHPKFNIPSARSNRKRYFVGEEAQCMYDGLYLHYPIERGLVTRWDDMEKLWKDLFEWELGVKPNEQPVFMTEPSLNPRETREKTTEIMFEKFNVPALYLCNHAVGALCASACITGLVLDSGDGVTCTVPIYEGYSLPRAITKLYVAGRDITEHLTRLLLAKGYTFPCILNKAVVDDIKEKLCTVSWGSKDSEKCYQRSLSEYKLPDGNTIQMSDHLCQVPEVLFTPEHLGIHDLGISKMVCNSIMKCDTDIQENLFAEIVLSGGTTLFPGLQDRLLKELEVLAFEGTPIKITASPDRCYSAWIGGSVMTSLTTFKQMWVTAEDFKEYGAFVVQRKCF.

It belongs to the actin family.

Its subcellular location is the cytoplasm. The protein resides in the cytoskeleton. The protein localises to the nucleus. It is found in the cytoplasmic vesicle. It localises to the secretory vesicle. Its subcellular location is the acrosome. Negatively regulates the Hedgehog (SHH) signaling. Binds to the promoter of the SHH signaling mediator, GLI1, and inhibits its expression. This chain is Actin-related protein T1 (Actrt1), found in Rattus norvegicus (Rat).